A 536-amino-acid chain; its full sequence is Multifunctional cytochrome P450 monooxygenase af510 (536 aa).

Residues 4–24 (ELSTLQLSCVAFVAFMAVLVF) form a helical membrane-spanning segment. N-linked (GlcNAc...) asparagine glycosylation is found at Asn-210 and Asn-293. Cys-448 lines the heme pocket.

Belongs to the cytochrome P450 family. Requires heme as cofactor.

It is found in the membrane. The catalysed reaction is (+)-exo-beta-bergamotene + 2 reduced [NADPH--hemoprotein reductase] + 3 O2 = 5-dehydro-6-demethoxyfumagillol + 2 oxidized [NADPH--hemoprotein reductase] + 3 H2O + 2 H(+). Its pathway is secondary metabolite biosynthesis; terpenoid biosynthesis. In terms of biological role, multifunctional cytochrome P450 monooxygenase; part of the gene cluster that mediates the biosynthesis of fumagillin, a meroterpenoid that has numerous biological activities including irreversible inhibition of human type 2 methionine aminopeptidase (METAP2). Within the pathway, the multifunctional cytochrome P450 monooxygenase af510 acts as a 2,4,6-trichlorophenol monooxygenase that first performs the C-H hydroxylation at the bridgehead C5 position to yield 5R-hydroxyl-beta-trans-bergamotene. Subsequently, a four electron oxidation initiated at C-9 coupled to cleavage of the cyclobutane C5-C8 bond of the bicyclo[3.1.1] core yields the epoxyketone intermediate 5-keto-cordycol. An additional epoxidation reaction also catalyzed by af510 then furnishes the characteristic bisepoxide ketone 5-keto-demethoxyfumagillol. The pathway begins with the conversion of farnesyl pyrophosphate (FPP) to beta-trans-bergamotene by the membrane-bound beta-trans-bergamotene synthase af520. The multifunctional cytochrome P450 monooxygenase af510 then converts beta-trans-bergamotene into 5-keto-demethoxyfumagillol via several oxydation steps. 5-keto-demethoxyfumagillol is then subjected to successive C-6 hydroxylation and O-methylation by the dioxygenase af480 and O-methyltransferase af390-400, respectively, to yield 5-keto-fumagillol, which is then stereoselectively reduced by the keto-reductase af490 to 5R-hydroxy-seco-sesquiterpene. The next step is the polyketide transferase af380-catalyzed transfer of a dodecapentaenoyl group synthesized by the polyketide synthase af370 onto 5R-hydroxy-seco-sesquiterpene which leads to the production of prefumagillin. Finally, oxidative cleavage by the monooxygenase af470 converts prefumagillin to fumagillin. This Aspergillus fumigatus (strain ATCC MYA-4609 / CBS 101355 / FGSC A1100 / Af293) (Neosartorya fumigata) protein is Multifunctional cytochrome P450 monooxygenase af510.